We begin with the raw amino-acid sequence, 224 residues long: 7-cyano-7-deazaguanine synthase (224 aa).

An ATP-binding site is contributed by 10-20 (LSGGLDSATVV). Zn(2+) contacts are provided by Cys189, Cys199, Cys202, and Cys205.

Belongs to the QueC family. Requires Zn(2+) as cofactor.

It catalyses the reaction 7-carboxy-7-deazaguanine + NH4(+) + ATP = 7-cyano-7-deazaguanine + ADP + phosphate + H2O + H(+). It functions in the pathway purine metabolism; 7-cyano-7-deazaguanine biosynthesis. Its function is as follows. Catalyzes the ATP-dependent conversion of 7-carboxy-7-deazaguanine (CDG) to 7-cyano-7-deazaguanine (preQ(0)). This is 7-cyano-7-deazaguanine synthase from Ectopseudomonas mendocina (strain ymp) (Pseudomonas mendocina).